A 92-amino-acid polypeptide reads, in one-letter code: MDWQGQKLVEQLMQILLVISGVVAVVVGYTTESFRTMMLIYAGGVVLTTLVTVPNWPFYNLHPLKWLDPSEAEKHPKPEVVSVASKKKFSKK.

Topologically, residues 1-12 are cytoplasmic; the sequence is MDWQGQKLVEQL. Residues 13-30 traverse the membrane as a helical segment; it reads MQILLVISGVVAVVVGYT. The Lumenal portion of the chain corresponds to 31 to 36; it reads TESFRT. Residues 37-59 form a helical membrane-spanning segment; sequence MMLIYAGGVVLTTLVTVPNWPFY. The Cytoplasmic portion of the chain corresponds to 60 to 92; the sequence is NLHPLKWLDPSEAEKHPKPEVVSVASKKKFSKK. Residues 73–92 form a disordered region; it reads EKHPKPEVVSVASKKKFSKK.

It belongs to the SPCS1 family. Component of the signal peptidase complex (SPC) composed of a catalytic subunit SEC11 and three accessory subunits SPCS1, SPCS2 and SPCS3. The complex induces a local thinning of the ER membrane which is used to measure the length of the signal peptide (SP) h-region of protein substrates. This ensures the selectivity of the complex towards h-regions shorter than 18-20 amino acids.

It is found in the endoplasmic reticulum membrane. Component of the signal peptidase complex (SPC) which catalyzes the cleavage of N-terminal signal sequences from nascent proteins as they are translocated into the lumen of the endoplasmic reticulum. Dispensable for SPC enzymatic activity. In Arabidopsis thaliana (Mouse-ear cress), this protein is Signal peptidase complex subunit 1.